We begin with the raw amino-acid sequence, 215 residues long: MSNNSRHYSAIDEAILQGQAMLETLFGKPVAQRENPAKGLSQPALTSAEKKQSIGFMRVNHSGEVCAQALYHGQMATAKNPAVRALFTTAAKEETDHLAWCQERLEELGGHTSYLNAFWYTNSFLIGLLAGLSGDPLSLGFVEETEKQVEIHLADHLRKIPSNDLKSRKIVEYMQQDEIQHGLNARSSGAKELPYLVKKLMAFQAKVMTTLAYWI.

6 residues coordinate Fe cation: Glu-64, Glu-94, His-97, Glu-146, Glu-178, and His-181.

It belongs to the COQ7 family. Fe cation serves as cofactor.

Its subcellular location is the cell membrane. It carries out the reaction a 5-methoxy-2-methyl-3-(all-trans-polyprenyl)benzene-1,4-diol + AH2 + O2 = a 3-demethylubiquinol + A + H2O. It participates in cofactor biosynthesis; ubiquinone biosynthesis. Catalyzes the hydroxylation of 2-nonaprenyl-3-methyl-6-methoxy-1,4-benzoquinol during ubiquinone biosynthesis. In Coxiella burnetii (strain RSA 331 / Henzerling II), this protein is 3-demethoxyubiquinol 3-hydroxylase.